The primary structure comprises 84 residues: Apovitellenin-1 (84 aa).

This sequence belongs to the apovitellenin family. Monomer.

Protein component of the very low density lipoprotein (VLDL) of egg-laying females. Potent lipoprotein lipase inhibitor, preventing the loss of triglycerides from VLDL on their way from the liver to the growing oocytes. The polypeptide is Apovitellenin-1 (Dromaius novaehollandiae (Emu)).